The following is a 319-amino-acid chain: Methionyl-tRNA formyltransferase (319 aa).

112-115 (SILP) is a binding site for (6S)-5,6,7,8-tetrahydrofolate.

The protein belongs to the Fmt family.

It carries out the reaction L-methionyl-tRNA(fMet) + (6R)-10-formyltetrahydrofolate = N-formyl-L-methionyl-tRNA(fMet) + (6S)-5,6,7,8-tetrahydrofolate + H(+). Attaches a formyl group to the free amino group of methionyl-tRNA(fMet). The formyl group appears to play a dual role in the initiator identity of N-formylmethionyl-tRNA by promoting its recognition by IF2 and preventing the misappropriation of this tRNA by the elongation apparatus. The protein is Methionyl-tRNA formyltransferase of Shewanella denitrificans (strain OS217 / ATCC BAA-1090 / DSM 15013).